We begin with the raw amino-acid sequence, 470 residues long: Nuclear receptor subfamily 0 group B member 1 (470 aa).

Tandem repeats lie at residues 1 to 67 (MAGE…YRCC), 68 to 133 (FCGK…YRCC), and 134 to 200 (FCGE…YRCC). A 4 X 67 AA tandem repeats region spans residues 1 to 253 (MAGENHQWQG…RPVALKSPQV (253 aa)). Short sequence motifs (LXXLL motif) lie at residues 13–17 (LYNML), 80–84 (LYSML), and 146–150 (LYSLL). Residues 201 to 253 (FCGEDHPQQGSTLYCMPTSTNQAQAAPEERPRAPWWDTSSGALRPVALKSPQV) form a 4; truncated repeat. The 265-residue stretch at 205-469 (DHPQQGSTLY…DMMLEMLCTK (265 aa)) folds into the NR LBD domain. Positions 461–466 (MMLEML) match the AF-2 motif motif.

Belongs to the nuclear hormone receptor family. NR0 subfamily. In terms of assembly, homodimer. Interacts with NR5A1, NR5A2, NR0B2 and with COPS2. Interacts with ESRRB; represses ESRRB activity at the GATA6 promoter.

It localises to the nucleus. It is found in the cytoplasm. Nuclear receptor that lacks a DNA-binding domain and acts as a corepressor that inhibits the transcriptional activity of other nuclear receptors through heterodimeric interactions. Component of a cascade required for the development of the hypothalamic-pituitary-adrenal-gonadal axis. May also have a role in the development of the embryo and in the maintenance of embryonic stem cell pluripotency. The chain is Nuclear receptor subfamily 0 group B member 1 (NR0B1) from Pan troglodytes (Chimpanzee).